A 905-amino-acid chain; its full sequence is Alanine--tRNA ligase (905 aa).

Positions 569, 573, 693, and 697 each coordinate Zn(2+).

The protein belongs to the class-II aminoacyl-tRNA synthetase family. Zn(2+) serves as cofactor.

It is found in the cytoplasm. The catalysed reaction is tRNA(Ala) + L-alanine + ATP = L-alanyl-tRNA(Ala) + AMP + diphosphate. Its function is as follows. Catalyzes the attachment of alanine to tRNA(Ala) in a two-step reaction: alanine is first activated by ATP to form Ala-AMP and then transferred to the acceptor end of tRNA(Ala). Also edits incorrectly charged Ser-tRNA(Ala) and Gly-tRNA(Ala) via its editing domain. This is Alanine--tRNA ligase from Roseiflexus sp. (strain RS-1).